The chain runs to 208 residues: Intraflagellar transport protein 43 homolog (208 aa).

Met1 carries the N-acetylmethionine modification. The segment at 18-65 (SRAKMGRRAQQESAQAENHLNGKNSSLTLTGETSSAKLPRCRQGGWAG) is disordered. Residues 28-53 (QESAQAENHLNGKNSSLTLTGETSSA) show a composition bias toward polar residues. Ser78 is subject to Phosphoserine.

The protein belongs to the IFT43 family. Component of the IFT complex A (IFT-A) complex. IFT-A complex is divided into a core subcomplex composed of IFT122:IFT140:WDR19 which is associated with TULP3 and a peripheral subcomplex composed of IFT43:WDR35:TTC21B. Interacts directy with IFT122, WDR35 and TTC21B. As to expression, expressed in the retina, predominantly in the photoreceptor outer segment.

It localises to the cytoplasm. The protein resides in the cytoskeleton. It is found in the cell projection. Its subcellular location is the cilium. As a component of IFT complex A (IFT-A), a complex required for retrograde ciliary transport and entry into cilia of G protein-coupled receptors (GPCRs), it is involved in ciliogenesis. Involved in retrograde ciliary transport along microtubules from the ciliary tip to the base. This Homo sapiens (Human) protein is Intraflagellar transport protein 43 homolog.